Here is a 208-residue protein sequence, read N- to C-terminus: CASP-like protein 2U9 (208 aa).

At 1–27 the chain is on the cytoplasmic side; it reads MGVADAPSPGNVPVLGDMKNRSAAEMK. A helical transmembrane segment spans residues 28 to 48; the sequence is ISVLALRALTLVLLVIALALM. The Extracellular segment spans residues 49–87; that stretch reads VSNKQTQSIPIKLPGMASTIFLKKTATFSQITGVQYYVG. The helical transmembrane segment at 88–108 threads the bilayer; it reads ALSVAVAYMFFQMLAGLFTIL. The Cytoplasmic segment spans residues 109-120; sequence TTGSIVGSKSRA. The helical transmembrane segment at 121–141 threads the bilayer; it reads WVTFILDQLIAYLMVSAATVV. At 142–168 the chain is on the extracellular side; sequence AEVGYIARRGETKVGWNQVCSDFKHYC. The helical transmembrane segment at 169 to 189 threads the bilayer; it reads FIYGFSLVNAFLATIAFLPVV. The Cytoplasmic portion of the chain corresponds to 190–208; sequence AVSAFHLFRMYGAQSAQSK.

The protein belongs to the Casparian strip membrane proteins (CASP) family. As to quaternary structure, homodimer and heterodimers.

The protein localises to the cell membrane. The sequence is that of CASP-like protein 2U9 from Selaginella moellendorffii (Spikemoss).